The sequence spans 30 residues: U5-ctenitoxin-Pk1b (30 aa).

2 disulfide bridges follow: cysteine 6–cysteine 23 and cysteine 13–cysteine 29.

It belongs to the neurotoxin 04 (omega-agtx) family. 02 (Tx1) subfamily. In terms of tissue distribution, expressed by the venom gland.

It is found in the secreted. In terms of biological role, lethal neurotoxin. Causes spastic paralysis and death in mice in 4-6 minutes after intracerebroventricular injection at dose levels of 1.5 ug per mouse. The protein is U5-ctenitoxin-Pk1b of Phoneutria keyserlingi (Brazilian wandering spider).